The chain runs to 676 residues: Capsid vertex component 1 (676 aa).

Positions 253 to 264 are enriched in low complexity; it reads HPVRPSSSRVAS. Positions 253-308 are disordered; that stretch reads HPVRPSSSRVASGLLQSAKGHGAQTSNTDPINNGSFDGVLEPPGQGRFTGKKNNSS. The segment covering 275–287 has biased composition (polar residues); that stretch reads AQTSNTDPINNGS.

It belongs to the herpesviridae CVC1 protein family. Interacts (via C-terminus) with capsid vertex component 2/CVC2.

The protein localises to the virion. Its subcellular location is the host nucleus. Its function is as follows. Capsid vertex-specific component that plays a role during viral DNA encapsidation, assuring correct genome cleavage and presumably stabilizing capsids that contain full-length viral genomes. This chain is Capsid vertex component 1, found in Varicella-zoster virus (strain Dumas) (HHV-3).